We begin with the raw amino-acid sequence, 795 residues long: Phenylalanine--tRNA ligase beta subunit (795 aa).

The region spanning 39 to 148 (ADEFHTVVVG…ADAPVGEDYR (110 aa)) is the tRNA-binding domain. One can recognise a B5 domain in the interval 401 to 476 (PKRDGITLRA…RVYGYNSIQA (76 aa)). Mg(2+) is bound by residues D454, D460, E463, and E464. Positions 701 to 794 (SRYPSIRRDL…LKSEFNATLR (94 aa)) constitute an FDX-ACB domain.

This sequence belongs to the phenylalanyl-tRNA synthetase beta subunit family. Type 1 subfamily. Tetramer of two alpha and two beta subunits. The cofactor is Mg(2+).

It localises to the cytoplasm. It carries out the reaction tRNA(Phe) + L-phenylalanine + ATP = L-phenylalanyl-tRNA(Phe) + AMP + diphosphate + H(+). The sequence is that of Phenylalanine--tRNA ligase beta subunit from Idiomarina loihiensis (strain ATCC BAA-735 / DSM 15497 / L2-TR).